Here is a 406-residue protein sequence, read N- to C-terminus: Tyrosine--tRNA ligase (406 aa).

Y35 contributes to the L-tyrosine binding site. The short motif at 40 to 49 is the 'HIGH' region element; sequence ATSTSLHIGH. L-tyrosine is bound by residues Y166 and Q170. Residues 226–230 carry the 'KMSKS' region motif; it reads KMGKS. K229 contributes to the ATP binding site. The S4 RNA-binding domain occupies 341–405; the sequence is ILLIDLMVLS…IGKKRILRVI (65 aa).

Belongs to the class-I aminoacyl-tRNA synthetase family. TyrS type 1 subfamily. In terms of assembly, homodimer.

The protein localises to the cytoplasm. The enzyme catalyses tRNA(Tyr) + L-tyrosine + ATP = L-tyrosyl-tRNA(Tyr) + AMP + diphosphate + H(+). In terms of biological role, catalyzes the attachment of tyrosine to tRNA(Tyr) in a two-step reaction: tyrosine is first activated by ATP to form Tyr-AMP and then transferred to the acceptor end of tRNA(Tyr). This Borrelia turicatae (strain 91E135) protein is Tyrosine--tRNA ligase.